Reading from the N-terminus, the 942-residue chain is Isoleucine--tRNA ligase (942 aa).

The 'HIGH' region signature appears at 58 to 68 (PYANGDIHIGH). E566 lines the L-isoleucyl-5'-AMP pocket. Residues 607–611 (KMSKS) carry the 'KMSKS' region motif. Position 610 (K610) interacts with ATP. Residues C905, C908, C925, and C928 each coordinate Zn(2+).

This sequence belongs to the class-I aminoacyl-tRNA synthetase family. IleS type 1 subfamily. Monomer. Zn(2+) is required as a cofactor.

It localises to the cytoplasm. The enzyme catalyses tRNA(Ile) + L-isoleucine + ATP = L-isoleucyl-tRNA(Ile) + AMP + diphosphate. In terms of biological role, catalyzes the attachment of isoleucine to tRNA(Ile). As IleRS can inadvertently accommodate and process structurally similar amino acids such as valine, to avoid such errors it has two additional distinct tRNA(Ile)-dependent editing activities. One activity is designated as 'pretransfer' editing and involves the hydrolysis of activated Val-AMP. The other activity is designated 'posttransfer' editing and involves deacylation of mischarged Val-tRNA(Ile). This Pseudoalteromonas atlantica (strain T6c / ATCC BAA-1087) protein is Isoleucine--tRNA ligase.